Reading from the N-terminus, the 444-residue chain is MAECLHIVGAGMAGSEAAWQAAEMGVPVVLHEMRPKVGTFAHRTGQFAEMVCSNSFRSDDDERNAVGLLHWEMRAARGLIMEMAAAHRLPAGGALAVDRDPFAESVTARLRAHPLISVVEEEVAELPSSGNWIVATGPLTSSALAESLRALTGAEALAFFDAIAPIVYAETIDMEVAWRQSRYDKGETEDERTAYINCPMNREQYEAFIDALLAAEKTEFHEGETAGYFDGCLPIEVMAERGRETLRHGPMKPVGLTNSHRPAEKAYAVVQLRRDNKLGTLYNIVGFQTKMKYGAQTAVFKMIPGLENASFARLGGIHRNTFLNSPTLLDDRMRLKLRPNIRFAGQVTGVEGYVESAAMGLLAGRMAAAEILGRDLPPPPPETAMGALVTHITGGAEAKSFQPMNVNFGLFPPIDARGGRRGRKDRYKAYTDRAKAAFTEWLGA.

9–14 (GAGMAG) serves as a coordination point for FAD.

The protein belongs to the MnmG family. TrmFO subfamily. The cofactor is FAD.

It is found in the cytoplasm. It catalyses the reaction uridine(54) in tRNA + (6R)-5,10-methylene-5,6,7,8-tetrahydrofolate + NADH + H(+) = 5-methyluridine(54) in tRNA + (6S)-5,6,7,8-tetrahydrofolate + NAD(+). The enzyme catalyses uridine(54) in tRNA + (6R)-5,10-methylene-5,6,7,8-tetrahydrofolate + NADPH + H(+) = 5-methyluridine(54) in tRNA + (6S)-5,6,7,8-tetrahydrofolate + NADP(+). Functionally, catalyzes the folate-dependent formation of 5-methyl-uridine at position 54 (M-5-U54) in all tRNAs. The protein is Methylenetetrahydrofolate--tRNA-(uracil-5-)-methyltransferase TrmFO of Cereibacter sphaeroides (strain ATCC 17029 / ATH 2.4.9) (Rhodobacter sphaeroides).